We begin with the raw amino-acid sequence, 149 residues long: MDLILLQKVTNLGNLGDKVSVKPGYGRNFLVPQGKAVPATAANVEAFETKRAEYEAKANTILADAQSRATKFEGASVTIGAHASTEGKLYGSVGPRDIAEAFTAAGLPLEKSEVILGEGAFRNVGEYDVVLHLHADVETTVKVIVESDA.

It belongs to the bacterial ribosomal protein bL9 family.

In terms of biological role, binds to the 23S rRNA. This Xanthomonas campestris pv. campestris (strain 8004) protein is Large ribosomal subunit protein bL9.